A 475-amino-acid chain; its full sequence is Ribulose bisphosphate carboxylase large chain (475 aa).

A propeptide spanning residues 1 to 2 (MS) is cleaved from the precursor. Pro-3 is subject to N-acetylproline. An N6,N6,N6-trimethyllysine modification is found at Lys-14. Asn-123 and Thr-173 together coordinate substrate. The active-site Proton acceptor is Lys-175. Residue Lys-177 coordinates substrate. Positions 201, 203, and 204 each coordinate Mg(2+). Lys-201 carries the N6-carboxylysine modification. His-294 acts as the Proton acceptor in catalysis. Positions 295, 327, and 379 each coordinate substrate.

Belongs to the RuBisCO large chain family. Type I subfamily. Heterohexadecamer of 8 large chains and 8 small chains; disulfide-linked. The disulfide link is formed within the large subunit homodimers. The cofactor is Mg(2+). In terms of processing, the disulfide bond which can form in the large chain dimeric partners within the hexadecamer appears to be associated with oxidative stress and protein turnover.

The protein localises to the plastid. The protein resides in the chloroplast. It catalyses the reaction 2 (2R)-3-phosphoglycerate + 2 H(+) = D-ribulose 1,5-bisphosphate + CO2 + H2O. The catalysed reaction is D-ribulose 1,5-bisphosphate + O2 = 2-phosphoglycolate + (2R)-3-phosphoglycerate + 2 H(+). RuBisCO catalyzes two reactions: the carboxylation of D-ribulose 1,5-bisphosphate, the primary event in carbon dioxide fixation, as well as the oxidative fragmentation of the pentose substrate in the photorespiration process. Both reactions occur simultaneously and in competition at the same active site. This chain is Ribulose bisphosphate carboxylase large chain, found in Buxus microphylla (Littleleaf boxwood).